The sequence spans 450 residues: ATP-dependent protease ATPase subunit HslU (450 aa).

Residues Val-29, 71–76 (GVGKTE), Asp-261, Glu-328, and Arg-400 each bind ATP.

This sequence belongs to the ClpX chaperone family. HslU subfamily. As to quaternary structure, a double ring-shaped homohexamer of HslV is capped on each side by a ring-shaped HslU homohexamer. The assembly of the HslU/HslV complex is dependent on binding of ATP.

The protein resides in the cytoplasm. ATPase subunit of a proteasome-like degradation complex; this subunit has chaperone activity. The binding of ATP and its subsequent hydrolysis by HslU are essential for unfolding of protein substrates subsequently hydrolyzed by HslV. HslU recognizes the N-terminal part of its protein substrates and unfolds these before they are guided to HslV for hydrolysis. The chain is ATP-dependent protease ATPase subunit HslU from Rickettsia akari (strain Hartford).